Here is a 172-residue protein sequence, read N- to C-terminus: MQNKRDSYNRDDLLASSQGELFGPGYPQLPAPNMLMMDRVTKMSETEGDFGKGLILAELDITPDLWFFDCHFPGDPVMPGCLGLDAMWQLVGFFLGWVGGKGKGRALGVGEVKFTGQILPTAKKVTYEIHMKRVVNRKLVMGLADGRVCVDGKEIYVAKDLKVGLFQDTSSF.

His-71 is a catalytic residue.

The protein belongs to the thioester dehydratase family. FabA subfamily. Homodimer.

The protein localises to the cytoplasm. The catalysed reaction is a (3R)-hydroxyacyl-[ACP] = a (2E)-enoyl-[ACP] + H2O. It catalyses the reaction (3R)-hydroxydecanoyl-[ACP] = (2E)-decenoyl-[ACP] + H2O. It carries out the reaction (2E)-decenoyl-[ACP] = (3Z)-decenoyl-[ACP]. It functions in the pathway lipid metabolism; fatty acid biosynthesis. Its function is as follows. Necessary for the introduction of cis unsaturation into fatty acids. Catalyzes the dehydration of (3R)-3-hydroxydecanoyl-ACP to E-(2)-decenoyl-ACP and then its isomerization to Z-(3)-decenoyl-ACP. Can catalyze the dehydratase reaction for beta-hydroxyacyl-ACPs with saturated chain lengths up to 16:0, being most active on intermediate chain length. This Vibrio parahaemolyticus serotype O3:K6 (strain RIMD 2210633) protein is 3-hydroxydecanoyl-[acyl-carrier-protein] dehydratase.